The sequence spans 203 residues: Transmembrane emp24 domain-containing protein (203 aa).

An N-terminal signal peptide occupies residues 1-22; that stretch reads MASIRLLPSCIVLMFLARSSLC. Topologically, residues 23–170 are lumenal; sequence YFITIDAHGE…RSINDNTNSR (148 aa). Residues 32 to 114 form the GOLD domain; the sequence is EECFHDKVTS…PKVLKFSMDI (83 aa). Residues 171 to 191 traverse the membrane as a helical segment; sequence VVWWSFFESLVLVAMTLGQVY. Residues 192-203 lie on the Cytoplasmic side of the membrane; the sequence is YLKRFFEVRRVV.

The protein belongs to the EMP24/GP25L family.

It is found in the cytoplasmic vesicle membrane. Could have a role in the budding of coatomer-coated and other species of coated vesicles. This chain is Transmembrane emp24 domain-containing protein, found in Nematostella vectensis (Starlet sea anemone).